We begin with the raw amino-acid sequence, 769 residues long: Wall-associated receptor kinase-like 10 (769 aa).

The first 24 residues, 1–24 (MSSNCSCSLLSLFSLLLIIDLTVA), serve as a signal peptide directing secretion. The Extracellular portion of the chain corresponds to 25–358 (SSCPKTCGGI…YTCEYTNHRP (334 aa)). 8 N-linked (GlcNAc...) asparagine glycosylation sites follow: Asn58, Asn114, Asn134, Asn182, Asn187, Asn237, Asn262, and Asn296. The interval 291-351 (CLCDYNSTTT…CVNLLGGYTC (61 aa)) is atypical EGF-like. Disulfide bonds link Cys293–Cys305, Cys327–Cys342, and Cys337–Cys351. Residues 359–379 (LVIGLSTSFSTLVFIGGIYWL) form a helical membrane-spanning segment. Over 380–769 (YKFIRRQRRL…RSDVEPLFPR (390 aa)) the chain is Cytoplasmic. One can recognise a Protein kinase domain in the interval 433-718 (FSLTRILGEG…SYSEDMQPYE (286 aa)). Residues 439 to 447 (LGEGGQGTV) and Lys461 contribute to the ATP site. Residue Tyr506 is modified to Phosphotyrosine. Asp559 functions as the Proton acceptor in the catalytic mechanism. Thr593 and Thr598 each carry phosphothreonine. Phosphotyrosine is present on Tyr606.

Belongs to the protein kinase superfamily. Ser/Thr protein kinase family.

The protein localises to the membrane. The catalysed reaction is L-seryl-[protein] + ATP = O-phospho-L-seryl-[protein] + ADP + H(+). It carries out the reaction L-threonyl-[protein] + ATP = O-phospho-L-threonyl-[protein] + ADP + H(+). Its function is as follows. Serine/threonine-protein kinase that may function as a signaling receptor of extracellular matrix component. This is Wall-associated receptor kinase-like 10 (WAKL10) from Arabidopsis thaliana (Mouse-ear cress).